Consider the following 577-residue polypeptide: Solute carrier family 22 member 16 (577 aa).

The helical transmembrane segment at 23–43 (LYFICAFQNISCGIHYLASVF) threads the bilayer. Residues asparagine 57, asparagine 65, asparagine 68, and asparagine 108 are each glycosylated (N-linked (GlcNAc...) asparagine). Transmembrane regions (helical) follow at residues 152–172 (WLAM…SVTF), 183–203 (VVLW…AFAV), 214–234 (FLAM…MEFI), 244–264 (VHLH…GYLV), and 268–288 (WLYQ…CWVL). N-linked (GlcNAc...) asparagine glycans are attached at residues asparagine 345 and asparagine 352. The next 6 membrane-spanning stretches (helical) occupy residues 359 to 379 (TLTV…FSLN), 389 to 409 (LNLF…CIAM), 416 to 436 (TVLA…MVIP), 441 to 461 (ILGV…FGLI), 476 to 496 (LAVG…PFSV), and 501 to 521 (IWIF…GVLT). Residues 543–577 (ESENESKSSKLLLTTNNSGLEKTEAITPRDSGLGE) are disordered. N-linked (GlcNAc...) asparagine glycosylation is found at asparagine 546 and asparagine 558. The span at 551 to 560 (SKLLLTTNNS) shows a compositional bias: low complexity.

It belongs to the major facilitator (TC 2.A.1) superfamily. Organic cation transporter (TC 2.A.1.19) family. As to expression, expressed in testis and epididymis (at protein level). Expressed in endometrium (at protein level); highly expressed during the normal secretory phase, but expression is significantly reduced in the proliferative phase. Expressed at lower levels in adult tissues including bone marrow (at protein level). Expressed in hematopoietic cells, including CD34(+) leukocytes. Expressed in fetal liver (at protein level), brain, lung, kidney, heart, skeletal muscle, spleen and thymus. Expressed in leukemia cells. Abundantly expressed in ovarian cancer clear-cell adenocarcinoma.

It is found in the cell membrane. It catalyses the reaction (R)-carnitine(in) = (R)-carnitine(out). The enzyme catalyses spermidine(in) = spermidine(out). In terms of biological role, facilitative organic cation transporter that mediates the transport of carnitine as well as the polyamine spermidine. Mediates the partially Na(+)-dependent bidirectional transport of carnitine. May mediate L-carnitine secretion from testis epididymal epithelium into the lumen which is involved in the maturation of spermatozoa. This is Solute carrier family 22 member 16 from Homo sapiens (Human).